A 265-amino-acid polypeptide reads, in one-letter code: Synaptoporin (265 aa).

Residues 1–4 (MCMV) are Cytoplasmic-facing. Residues 1–202 (MCMVIFAPLF…NIWFVFKETG (202 aa)) form the MARVEL domain. The helical transmembrane segment at 5-25 (IFAPLFAIFAFATCGGYSGGL) threads the bilayer. Residues 26-81 (RLSVDCVNKTESNLSIDIAFAYPFRLHQVTFEVPTCEGKERQKLALVGDSSSSAEF) lie on the Vesicular side of the membrane. N-linked (GlcNAc...) asparagine glycans are attached at residues Asn-33 and Asn-38. The helical transmembrane segment at 82–102 (FVTVAVFAFLYSLAATVVYIF) threads the bilayer. The Cytoplasmic segment spans residues 103 to 114 (FQNKYRENNRGP). A helical membrane pass occupies residues 115–135 (LIDFIVTVVFSFLWLVGSSAW). Residues 136–177 (AKGLSDVKVATDPKEVLLLMSACKQPSNKCMAVHSPVMSSLN) lie on the Vesicular side of the membrane. Asn-177 carries an N-linked (GlcNAc...) asparagine glycan. The chain crosses the membrane as a helical span at residues 178-198 (TSVVFGFLNFILWAGNIWFVF). At 199–265 (KETGWHSSGQ…SGPTSFNNQI (67 aa)) the chain is on the cytoplasmic side. Residues 210–214 (YLSDP) form repeat 1. The segment at 210 to 242 (YLSDPMEKHSSSYNQGGYNQDSYGSSGGYSQQA) is 5 X approximate repeats. Ser-212 and Ser-220 each carry phosphoserine. The segment at 221–265 (SYNQGGYNQDSYGSSGGYSQQASLGPTSDEFGQQPSGPTSFNNQI) is disordered. 4 consecutive repeat copies span residues 222–226 (YNQGG), 227–231 (YNQDS), 232–236 (YGSSG), and 238–242 (YSQQA). The segment covering 224–243 (QGGYNQDSYGSSGGYSQQAS) has biased composition (low complexity). Residues 244–265 (LGPTSDEFGQQPSGPTSFNNQI) show a composition bias toward polar residues.

It belongs to the synaptophysin/synaptobrevin family. Central nervous system.

It is found in the cytoplasmic vesicle. Its subcellular location is the secretory vesicle. The protein localises to the synaptic vesicle membrane. It localises to the synapse. The protein resides in the synaptosome. Its function is as follows. Intrinsic membrane protein of small synaptic vesicles. Probable vesicular channel protein. The polypeptide is Synaptoporin (Synpr) (Rattus norvegicus (Rat)).